Consider the following 478-residue polypeptide: Lysosome membrane protein 2 (478 aa).

Over 1 to 4 (MGRC) the chain is Cytoplasmic. A helical transmembrane segment spans residues 5 to 27 (CFYTAGTLSLLLLVTSVTLLVAR). Residues 28 to 433 (VFQKAVDQSI…RLKSMINTTL (406 aa)) lie on the Lumenal side of the membrane. Residues asparagine 45, asparagine 68, and asparagine 105 are each glycosylated (N-linked (GlcNAc...) asparagine). Residues 155 to 191 (IIEAMLKAYQQKLFVTHTVDELLWGYKDEILSLIHVF) are important for interaction with GBA1. Residues asparagine 206, asparagine 224, asparagine 249, and asparagine 304 are each glycosylated (N-linked (GlcNAc...) asparagine). Cystine bridges form between cysteine 274-cysteine 329 and cysteine 312-cysteine 318. 3 N-linked (GlcNAc...) asparagine glycosylation sites follow: asparagine 325, asparagine 412, and asparagine 430. Residues 434-459 (IITNIPYIIMALGVFFGLVFTWLACK) form a helical membrane-spanning segment. Residues 460–478 (GQGSMDEGTADERAPLIRT) lie on the Cytoplasmic side of the membrane.

Belongs to the CD36 family. In terms of assembly, interacts with GBA1. (Microbial infection) Interacts with enterovirus 71 capsid proteins VP1 and VP2.

It is found in the lysosome membrane. Acts as a lysosomal receptor for glucosylceramidase (GBA1) targeting. In terms of biological role, (Microbial infection) Acts as a receptor for enterovirus 71. The polypeptide is Lysosome membrane protein 2 (SCARB2) (Homo sapiens (Human)).